The following is a 240-amino-acid chain: Ubiquinone biosynthesis O-methyltransferase (240 aa).

S-adenosyl-L-methionine is bound by residues Arg-44, Gly-64, Asp-85, and Met-129.

This sequence belongs to the methyltransferase superfamily. UbiG/COQ3 family.

The catalysed reaction is a 3-demethylubiquinol + S-adenosyl-L-methionine = a ubiquinol + S-adenosyl-L-homocysteine + H(+). It carries out the reaction a 3-(all-trans-polyprenyl)benzene-1,2-diol + S-adenosyl-L-methionine = a 2-methoxy-6-(all-trans-polyprenyl)phenol + S-adenosyl-L-homocysteine + H(+). The protein operates within cofactor biosynthesis; ubiquinone biosynthesis. In terms of biological role, O-methyltransferase that catalyzes the 2 O-methylation steps in the ubiquinone biosynthetic pathway. This chain is Ubiquinone biosynthesis O-methyltransferase, found in Escherichia fergusonii (strain ATCC 35469 / DSM 13698 / CCUG 18766 / IAM 14443 / JCM 21226 / LMG 7866 / NBRC 102419 / NCTC 12128 / CDC 0568-73).